Consider the following 401-residue polypeptide: Phosphoglycerate kinase (401 aa).

Substrate-binding positions include 23-25, arginine 38, 61-64, arginine 120, and arginine 153; these read DLN and HFGR. Residues lysine 203, glutamate 325, and 355–358 each bind ATP; that span reads GGDT.

Belongs to the phosphoglycerate kinase family. As to quaternary structure, monomer.

The protein resides in the cytoplasm. The enzyme catalyses (2R)-3-phosphoglycerate + ATP = (2R)-3-phospho-glyceroyl phosphate + ADP. It participates in carbohydrate degradation; glycolysis; pyruvate from D-glyceraldehyde 3-phosphate: step 2/5. In Rhizobium johnstonii (strain DSM 114642 / LMG 32736 / 3841) (Rhizobium leguminosarum bv. viciae), this protein is Phosphoglycerate kinase.